Consider the following 514-residue polypeptide: 2,3-bisphosphoglycerate-independent phosphoglycerate mutase (514 aa).

Mn(2+)-binding residues include Asp14 and Ser64. The active-site Phosphoserine intermediate is the Ser64. Residues His125, 155 to 156 (RD), Arg187, Arg193, 263 to 266 (RADR), and Lys337 contribute to the substrate site. Mn(2+)-binding residues include Asp404, His408, Asp445, His446, and His464.

This sequence belongs to the BPG-independent phosphoglycerate mutase family. In terms of assembly, monomer. The cofactor is Mn(2+).

The enzyme catalyses (2R)-2-phosphoglycerate = (2R)-3-phosphoglycerate. The protein operates within carbohydrate degradation; glycolysis; pyruvate from D-glyceraldehyde 3-phosphate: step 3/5. In terms of biological role, catalyzes the interconversion of 2-phosphoglycerate and 3-phosphoglycerate. This is 2,3-bisphosphoglycerate-independent phosphoglycerate mutase from Pseudoalteromonas translucida (strain TAC 125).